The following is a 389-amino-acid chain: Phospho-N-acetylmuramoyl-pentapeptide-transferase (389 aa).

10 helical membrane-spanning segments follow: residues 25–45 (RAVMANLTALLIGLAFGPWVI), 74–94 (MGGVLVLVSIAVSTLLWCDWG), 97–117 (FIWVVMLVTFGYGAIGWVDDY), 134–154 (FFWQTLIGLVAAVYLAFSVSE), 190–210 (ISYPLGVAGFIVLTYLVIVGS), 222–242 (GLVIMPVVLVGGGLGVFAYVM), 259–279 (AGELLIFCSALAGAGLAFLWF), 286–306 (VFMGDVGALALGGALGTVAVI), 311–331 (IVLFVMGGIFVVETLSVMAQV), and 366–386 (QVTVRFWIITMLLVLIGLSTL).

The protein belongs to the glycosyltransferase 4 family. MraY subfamily. Requires Mg(2+) as cofactor.

It localises to the cell inner membrane. The catalysed reaction is UDP-N-acetyl-alpha-D-muramoyl-L-alanyl-gamma-D-glutamyl-meso-2,6-diaminopimeloyl-D-alanyl-D-alanine + di-trans,octa-cis-undecaprenyl phosphate = di-trans,octa-cis-undecaprenyl diphospho-N-acetyl-alpha-D-muramoyl-L-alanyl-D-glutamyl-meso-2,6-diaminopimeloyl-D-alanyl-D-alanine + UMP. Its pathway is cell wall biogenesis; peptidoglycan biosynthesis. Its function is as follows. Catalyzes the initial step of the lipid cycle reactions in the biosynthesis of the cell wall peptidoglycan: transfers peptidoglycan precursor phospho-MurNAc-pentapeptide from UDP-MurNAc-pentapeptide onto the lipid carrier undecaprenyl phosphate, yielding undecaprenyl-pyrophosphoryl-MurNAc-pentapeptide, known as lipid I. The sequence is that of Phospho-N-acetylmuramoyl-pentapeptide-transferase from Cupriavidus necator (strain ATCC 17699 / DSM 428 / KCTC 22496 / NCIMB 10442 / H16 / Stanier 337) (Ralstonia eutropha).